The following is a 152-amino-acid chain: Large ribosomal subunit protein bL9 (152 aa).

Belongs to the bacterial ribosomal protein bL9 family.

Functionally, binds to the 23S rRNA. The protein is Large ribosomal subunit protein bL9 of Mycoplasmopsis synoviae (strain 53) (Mycoplasma synoviae).